The following is a 365-amino-acid chain: tRNA 2-selenouridine synthase (365 aa).

Residues L15–D138 enclose the Rhodanese domain. C98 serves as the catalytic S-selanylcysteine intermediate.

It belongs to the SelU family. Monomer.

It catalyses the reaction 5-methylaminomethyl-2-thiouridine(34) in tRNA + selenophosphate + (2E)-geranyl diphosphate + H2O + H(+) = 5-methylaminomethyl-2-selenouridine(34) in tRNA + (2E)-thiogeraniol + phosphate + diphosphate. It carries out the reaction 5-methylaminomethyl-2-thiouridine(34) in tRNA + (2E)-geranyl diphosphate = 5-methylaminomethyl-S-(2E)-geranyl-thiouridine(34) in tRNA + diphosphate. The enzyme catalyses 5-methylaminomethyl-S-(2E)-geranyl-thiouridine(34) in tRNA + selenophosphate + H(+) = 5-methylaminomethyl-2-(Se-phospho)selenouridine(34) in tRNA + (2E)-thiogeraniol. The catalysed reaction is 5-methylaminomethyl-2-(Se-phospho)selenouridine(34) in tRNA + H2O = 5-methylaminomethyl-2-selenouridine(34) in tRNA + phosphate. Its function is as follows. Involved in the post-transcriptional modification of the uridine at the wobble position (U34) of tRNA(Lys), tRNA(Glu) and tRNA(Gln). Catalyzes the conversion of 2-thiouridine (S2U-RNA) to 2-selenouridine (Se2U-RNA). Acts in a two-step process involving geranylation of 2-thiouridine (S2U) to S-geranyl-2-thiouridine (geS2U) and subsequent selenation of the latter derivative to 2-selenouridine (Se2U) in the tRNA chain. The chain is tRNA 2-selenouridine synthase from Shewanella pealeana (strain ATCC 700345 / ANG-SQ1).